Consider the following 298-residue polypeptide: Inosose dehydratase (298 aa).

This sequence belongs to the IolE/MocC family. The cofactor is glutathione. Co(2+) is required as a cofactor. Mn(2+) serves as cofactor.

It carries out the reaction scyllo-inosose = 3D-3,5/4-trihydroxycyclohexane-1,2-dione + H2O. Its pathway is polyol metabolism; myo-inositol degradation into acetyl-CoA; acetyl-CoA from myo-inositol: step 2/7. In terms of biological role, catalyzes the dehydration of inosose (2-keto-myo-inositol, 2KMI or 2,4,6/3,5-pentahydroxycyclohexanone) to 3D-(3,5/4)-trihydroxycyclohexane-1,2-dione (D-2,3-diketo-4-deoxy-epi-inositol). The chain is Inosose dehydratase from Bacillus velezensis (strain DSM 23117 / BGSC 10A6 / LMG 26770 / FZB42) (Bacillus amyloliquefaciens subsp. plantarum).